The sequence spans 80 residues: SPI-1 type 3 secretion system needle filament protein (80 aa).

This sequence belongs to the SctF family. As to quaternary structure, the core secretion machinery of the T3SS is composed of approximately 20 different proteins, including cytoplasmic components, a base, an export apparatus and a needle. This subunit polymerizes and forms the helical needle filament. Interacts with the needle tip protein SipD/SctA. Interacts with the needle adapter protein PrgJ/SctI, the secretin InvG/SctC and the minor export apparatus protein SpaP/SctR. In vitro, the needle protomer refolds spontaneously to extend the needle from the distal end.

The protein resides in the secreted. It localises to the cell surface. Its activity is regulated as follows. Binding of bile salts, including deoxycholate, to the PrgI:SipD interface may inhibit the T3SS function. Functionally, component of the type III secretion system (T3SS), also called injectisome, which is used to inject bacterial effector proteins into eukaryotic host cells. PrgI/SctF1 forms the external needle filament that protrudes from the bacterial surface. Is probably involved in the transduction of an activating signal, thought to be mediated by the distal tip of the needle filament, to the secretion machine. Required for invasion of epithelial cells. Required for the secretion of the effector protein SptP. Its function is as follows. During infection, can induce innate immune responses. The needle proteins interact with host TLR2 or TLR4, and induce signaling by NF-kappa-B and/or AP-1. This activation is MyD88 dependent and results in increased expression of cytokines, including TNF-alpha, IL-6 and IL-8. This chain is SPI-1 type 3 secretion system needle filament protein, found in Salmonella typhimurium (strain LT2 / SGSC1412 / ATCC 700720).